The chain runs to 460 residues: MGFVGRKVVVLGLGRSGLASARALREGGAEALCWDDGEAGRARAAAEGFTIHDPIRDGLDGVACLVTSPGIPHLYSTPHRAIVAAYAAGVPVDNDIGLFFRSLGQGDWAFHDTPPRVVAVTGSNGKSTTSALIAHILEEAGTPVQLAGNIGRGVLDIEPPIDGEVIVIELSSYQTELARALTPDIAVFTNLSADHLERHGGMGGYFAAKRRLFSEGGPERAVIGVDEIEGQYLAGQLVEGPEDGRLIRVSSGKLSGPGWDVSTRKGWLSEFRKGRQAASIDLRGVPGLPGAHNHQNAACAYGVCRALGLAPRVIEAAFATFEGLPHRSQRVAEINGVFYVNDSKATNVDAATKALGAFKRIRWICGGLEKDGGLEALWEAAGHVAKAYVIGREAEAFALHLGDIPKDVCGDMATAVARASADAQPGDTVLLAPAAASFDQYDSFETRGADFIAQVEKLQS.

An ATP-binding site is contributed by 122-128; that stretch reads GSNGKST.

It belongs to the MurCDEF family.

It is found in the cytoplasm. It carries out the reaction UDP-N-acetyl-alpha-D-muramoyl-L-alanine + D-glutamate + ATP = UDP-N-acetyl-alpha-D-muramoyl-L-alanyl-D-glutamate + ADP + phosphate + H(+). The protein operates within cell wall biogenesis; peptidoglycan biosynthesis. Its function is as follows. Cell wall formation. Catalyzes the addition of glutamate to the nucleotide precursor UDP-N-acetylmuramoyl-L-alanine (UMA). The protein is UDP-N-acetylmuramoylalanine--D-glutamate ligase of Jannaschia sp. (strain CCS1).